The following is a 182-amino-acid chain: Bifunctional protein PyrR (182 aa).

The PRPP-binding motif lies at 99–111 (IVLVDDVLFTGRT).

It belongs to the purine/pyrimidine phosphoribosyltransferase family. PyrR subfamily. As to quaternary structure, homodimer and homohexamer; in equilibrium.

It carries out the reaction UMP + diphosphate = 5-phospho-alpha-D-ribose 1-diphosphate + uracil. Functionally, regulates transcriptional attenuation of the pyrimidine nucleotide (pyr) operon by binding in a uridine-dependent manner to specific sites on pyr mRNA. This disrupts an antiterminator hairpin in the RNA and favors formation of a downstream transcription terminator, leading to a reduced expression of downstream genes. Its function is as follows. Also displays a weak uracil phosphoribosyltransferase activity which is not physiologically significant. The polypeptide is Bifunctional protein PyrR (Caldicellulosiruptor bescii (strain ATCC BAA-1888 / DSM 6725 / KCTC 15123 / Z-1320) (Anaerocellum thermophilum)).